We begin with the raw amino-acid sequence, 184 residues long: MKAKKYENQIYNENGRRCQRHGRRLAIADANGLNTVNAGDGKNLGTATATITTLQSCSVDLNLVTPNATVNRAGMLANREITKFSVGSKDCPSDTYAVWFKEIDGEGQGVAQGTTVTNKFYLKMTSADGTASVGDINIGTKSGKGLSGQLVGGKFDGKITVAYDSATAPADVYTYDLMAAVYVQ.

The signal sequence occupies residues 1 to 28 (MKAKKYENQIYNENGRRCQRHGRRLAIA). C57 and C91 are joined by a disulfide.

In terms of assembly, forms a polymeric structure, which disintegrates with elevated temperature into a monomer but with some relatively stable dimers.

The sequence is that of Non-fimbrial adhesin 1 (nfaA) from Escherichia coli.